A 107-amino-acid polypeptide reads, in one-letter code: LQFCKLDPPQRQTAQTKALETLLLVSQDPNWLIRYAAVVGLEALAKIPQLQQPIQTRFAQILATDTEQAICSSRATGSKTRNRRQTTNRKLKPAFVLLLILFVPLSR.

Belongs to the CpcE/RpcE/PecE family. In terms of assembly, cpcE and CpcF associate to form a lyase.

Required for the chromophorylation of the CpcA gene product. This is Phycocyanobilin lyase subunit beta (cpcF) from Mastigocladus laminosus (Fischerella sp.).